The sequence spans 347 residues: tRNA N6-adenosine threonylcarbamoyltransferase (347 aa).

2 residues coordinate Fe cation: His-113 and His-117. Substrate is bound by residues 136 to 140 (LVSGG), Asp-170, Gly-183, Asp-187, and Asn-282. Residue Asp-310 participates in Fe cation binding.

Belongs to the KAE1 / TsaD family. Fe(2+) is required as a cofactor.

Its subcellular location is the cytoplasm. The catalysed reaction is L-threonylcarbamoyladenylate + adenosine(37) in tRNA = N(6)-L-threonylcarbamoyladenosine(37) in tRNA + AMP + H(+). In terms of biological role, required for the formation of a threonylcarbamoyl group on adenosine at position 37 (t(6)A37) in tRNAs that read codons beginning with adenine. Is involved in the transfer of the threonylcarbamoyl moiety of threonylcarbamoyl-AMP (TC-AMP) to the N6 group of A37, together with TsaE and TsaB. TsaD likely plays a direct catalytic role in this reaction. The polypeptide is tRNA N6-adenosine threonylcarbamoyltransferase (Cutibacterium acnes (strain DSM 16379 / KPA171202) (Propionibacterium acnes)).